The primary structure comprises 1080 residues: Presequence protease 2, chloroplastic/mitochondrial (1080 aa).

The transit peptide at 1–84 (MLRSLTCSST…NGQFSRLSIR (84 aa)) directs the protein to the chloroplast and mitochondrion. A Zn(2+)-binding site is contributed by His-161. Glu-164 serves as the catalytic Proton acceptor. His-165 serves as a coordination point for Zn(2+). The active site involves Glu-239. A Zn(2+)-binding site is contributed by Glu-261. Arg-704 is a Mg(2+) binding site.

It belongs to the peptidase M16 family. PreP subfamily. In terms of assembly, homodimer. Zn(2+) serves as cofactor. It depends on Mg(2+) as a cofactor. In terms of tissue distribution, expressed in leaves, flowers and roots, but not detected in siliques and shoots.

The protein resides in the plastid. It localises to the chloroplast stroma. Its subcellular location is the mitochondrion matrix. Completely inhibited by the metal chelator orthophenanthroline. Functionally, ATP-independent protease that degrades both mitochondrial and chloroplastic transit peptides after their cleavage. Also degrades other unstructured peptides. Specific for peptides in the range of 10 to 65 residues. Shows a preference for cleavage after small polar residues and before basic residues, but without any positional preference. The chain is Presequence protease 2, chloroplastic/mitochondrial (PREP2) from Arabidopsis thaliana (Mouse-ear cress).